The primary structure comprises 597 residues: Zinc finger CCCH domain-containing protein 29 (597 aa).

2 ANK repeats span residues 76–106 and 111–143; these read EERT…DVNR and EKVT…SPNC. C3H1-type zinc fingers lie at residues 254–281 and 289–313; these read PYTC…HGVF and QYRT…HRRD. Positions 320–337 are enriched in polar residues; the sequence is ASTGSAMVSPRSSNQSPE. Residues 320–341 are disordered; it reads ASTGSAMVSPRSSNQSPEMSVM.

In terms of tissue distribution, expressed in roots and anthers.

Its subcellular location is the nucleus. Its function is as follows. Involved in salt stress response. May positively modulate plant tolerance to salt stress. This Arabidopsis thaliana (Mouse-ear cress) protein is Zinc finger CCCH domain-containing protein 29.